A 224-amino-acid polypeptide reads, in one-letter code: Uracil-DNA glycosylase (224 aa).

Catalysis depends on aspartate 62, which acts as the Proton acceptor.

Belongs to the uracil-DNA glycosylase (UDG) superfamily. UNG family.

It is found in the cytoplasm. The enzyme catalyses Hydrolyzes single-stranded DNA or mismatched double-stranded DNA and polynucleotides, releasing free uracil.. Its function is as follows. Excises uracil residues from the DNA which can arise as a result of misincorporation of dUMP residues by DNA polymerase or due to deamination of cytosine. The protein is Uracil-DNA glycosylase of Aliivibrio fischeri (strain ATCC 700601 / ES114) (Vibrio fischeri).